Here is a 555-residue protein sequence, read N- to C-terminus: Phosphomethylpyrimidine synthase (555 aa).

Substrate-binding positions include asparagine 191, methionine 220, tyrosine 249, histidine 285, serine 305–glycine 307, aspartate 346–arginine 349, and glutamate 385. Histidine 389 provides a ligand contact to Zn(2+). Tyrosine 412 lines the substrate pocket. Zn(2+) is bound at residue histidine 453. Residues cysteine 533, cysteine 536, and cysteine 541 each contribute to the [4Fe-4S] cluster site.

It belongs to the ThiC family. As to quaternary structure, homodimer. [4Fe-4S] cluster serves as cofactor.

It catalyses the reaction 5-amino-1-(5-phospho-beta-D-ribosyl)imidazole + S-adenosyl-L-methionine = 4-amino-2-methyl-5-(phosphooxymethyl)pyrimidine + CO + 5'-deoxyadenosine + formate + L-methionine + 3 H(+). The protein operates within cofactor biosynthesis; thiamine diphosphate biosynthesis. Catalyzes the synthesis of the hydroxymethylpyrimidine phosphate (HMP-P) moiety of thiamine from aminoimidazole ribotide (AIR) in a radical S-adenosyl-L-methionine (SAM)-dependent reaction. This Ehrlichia ruminantium (strain Gardel) protein is Phosphomethylpyrimidine synthase.